Here is a 696-residue protein sequence, read N- to C-terminus: Elongation factor G (696 aa).

The tr-type G domain maps to 8–290; the sequence is ERYRNIGISA…KVIELMPAPT (283 aa). GTP is bound by residues 17 to 24, 88 to 92, and 142 to 145; these read AHIDAGKT, DTPGH, and NKMD.

This sequence belongs to the TRAFAC class translation factor GTPase superfamily. Classic translation factor GTPase family. EF-G/EF-2 subfamily.

The protein localises to the cytoplasm. Catalyzes the GTP-dependent ribosomal translocation step during translation elongation. During this step, the ribosome changes from the pre-translocational (PRE) to the post-translocational (POST) state as the newly formed A-site-bound peptidyl-tRNA and P-site-bound deacylated tRNA move to the P and E sites, respectively. Catalyzes the coordinated movement of the two tRNA molecules, the mRNA and conformational changes in the ribosome. The sequence is that of Elongation factor G from Thiobacillus denitrificans (strain ATCC 25259 / T1).